The sequence spans 467 residues: Geranylgeranyl diphosphate reductase, chloroplastic (467 aa).

The N-terminal 43 residues, 1-43 (MATTVTLKSFTGLRQSSTEQTNFVSHVPSSLSLPQRRTSLRVT), are a transit peptide targeting the chloroplast.

Belongs to the geranylgeranyl reductase family. ChlP subfamily. In terms of assembly, part of the FLU-containing chloroplast membrane complex composed of FLU, CRD1, PORB, PORC, CHLP and HEMA1.

The protein resides in the plastid. It localises to the chloroplast membrane. It catalyses the reaction phytyl diphosphate + 3 NADP(+) = geranylgeranyl diphosphate + 3 NADPH + 3 H(+). Its pathway is porphyrin-containing compound metabolism; chlorophyll biosynthesis. It functions in the pathway cofactor biosynthesis; tocopherol biosynthesis. Catalyzes the reduction of geranylgeranyl diphosphate to phytyl diphosphate, providing phytol for both tocopherol and chlorophyll synthesis. The polypeptide is Geranylgeranyl diphosphate reductase, chloroplastic (CHLP) (Arabidopsis thaliana (Mouse-ear cress)).